The sequence spans 1441 residues: Remodeling and spacing factor 1 (1441 aa).

Positions 17 to 84 constitute a DDT domain; the sequence is PGSCPNFAVV…MRKIGKSVTA (68 aa). Glycyl lysine isopeptide (Lys-Gly) (interchain with G-Cter in SUMO2) cross-links involve residues lysine 136 and lysine 215. The span at 215–227 shows a compositional bias: polar residues; sequence KNSSQQDNSSRES. Residues 215–283 are disordered; it reads KNSSQQDNSS…TTVKKEKEDE (69 aa). Phosphoserine is present on serine 227. 2 stretches are compositionally biased toward basic and acidic residues: residues 234-257 and 274-283; these read ETKK…KSEE and TTVKKEKEDE. Residues lysine 236, lysine 243, lysine 248, lysine 252, and lysine 254 each participate in a glycyl lysine isopeptide (Lys-Gly) (interchain with G-Cter in SUMO2) cross-link. Lysine 277 participates in a covalent cross-link: Glycyl lysine isopeptide (Lys-Gly) (interchain with G-Cter in SUMO1); alternate. A Glycyl lysine isopeptide (Lys-Gly) (interchain with G-Cter in SUMO2); alternate cross-link involves residue lysine 277. Residues lysine 284, lysine 288, lysine 294, lysine 305, lysine 306, lysine 309, lysine 323, lysine 327, lysine 337, lysine 342, lysine 358, lysine 373, lysine 381, and lysine 390 each participate in a glycyl lysine isopeptide (Lys-Gly) (interchain with G-Cter in SUMO2) cross-link. The segment covering 330–340 has biased composition (basic and acidic residues); sequence RADPKDTKSSM. The segment at 330–385 is disordered; it reads RADPKDTKSSMEKPVAQEPERIEFGGNIKSSHEITEKSTEETEKLKNDQQAKIPLK. Basic and acidic residues predominate over residues 359-378; that stretch reads SSHEITEKSTEETEKLKNDQ. Phosphoserine is present on residues serine 392 and serine 397. Glycyl lysine isopeptide (Lys-Gly) (interchain with G-Cter in SUMO2) cross-links involve residues lysine 400, lysine 405, lysine 415, and lysine 419. At serine 429 the chain carries Phosphoserine. Lysine 439 is covalently cross-linked (Glycyl lysine isopeptide (Lys-Gly) (interchain with G-Cter in SUMO2)). Lysine 456 is covalently cross-linked (Glycyl lysine isopeptide (Lys-Gly) (interchain with G-Cter in SUMO1); alternate). A Glycyl lysine isopeptide (Lys-Gly) (interchain with G-Cter in SUMO2); alternate cross-link involves residue lysine 456. Residues lysine 463 and lysine 468 each participate in a glycyl lysine isopeptide (Lys-Gly) (interchain with G-Cter in SUMO2) cross-link. The span at 467 to 480 shows a compositional bias: basic and acidic residues; the sequence is TKEESYSPSKDRNI. The interval 467 to 634 is disordered; sequence TKEESYSPSK…AAETSPPSNI (168 aa). Residue serine 473 is modified to Phosphoserine. Residues 482-498 are compositionally biased toward polar residues; it reads TEGNGTESLNSVITSMK. Lysine 498 participates in a covalent cross-link: Glycyl lysine isopeptide (Lys-Gly) (interchain with G-Cter in SUMO2). A compositionally biased stretch (basic and acidic residues) spans 500–514; that stretch reads GELEKETAPLRKDAD. Residue serine 524 is modified to Phosphoserine. Residues 552–562 are compositionally biased toward polar residues; that stretch reads SKTALSSTESC. Residue lysine 565 forms a Glycyl lysine isopeptide (Lys-Gly) (interchain with G-Cter in SUMO2) linkage. The segment covering 565–601 has biased composition (basic and acidic residues); sequence KGEEKSPKTKKDKRPPILECLEKLEKSKKTFLDKDAQ. A phosphoserine mark is found at serine 570 and serine 604. The span at 609-621 shows a compositional bias: basic and acidic residues; sequence EVPKSTLESEKPG. Serine 622 bears the Phosphoserine mark. The residue at position 628 (threonine 628) is a Phosphothreonine. A Phosphoserine modification is found at serine 629. Glycyl lysine isopeptide (Lys-Gly) (interchain with G-Cter in SUMO2) cross-links involve residues lysine 662, lysine 663, lysine 670, lysine 677, lysine 698, and lysine 709. Residues 675 to 887 are disordered; that stretch reads FTKVEMDNLD…EEKESEEAIL (213 aa). Serine 748 carries the post-translational modification Phosphoserine. 3 stretches are compositionally biased toward basic and acidic residues: residues 753-770, 789-802, and 816-831; these read LEPE…EKTN, AEIR…KRGE, and KTDK…KDTN. Residues lysine 758, lysine 768, lysine 795, and lysine 799 each participate in a glycyl lysine isopeptide (Lys-Gly) (interchain with G-Cter in SUMO2) cross-link. Residues 864–873 are compositionally biased toward low complexity; it reads GSGSEKSSAA. Residues 874-887 show a composition bias toward acidic residues; the sequence is SEEEEEKESEEAIL. Phosphoserine is present on serine 882. Residues 891-941 form a PHD-type zinc finger; the sequence is DEPCKKCGLPNHPELILLCDSCDSGYHTACLRPPLMIIPDGEWFCPPCQHK. A coiled-coil region spans residues 942–1012; the sequence is LLCEKLEEQL…SKANLLERRS (71 aa). The tract at residues 983–1007 is disordered; sequence PPQEPDFSEDQEEKKKDSKKSKANL. Lysine 1039 is covalently cross-linked (Glycyl lysine isopeptide (Lys-Gly) (interchain with G-Cter in SUMO2)). Lysine 1050 is modified (N6-acetyllysine). The segment at 1063–1428 is disordered; it reads ISTILDEERK…EEEEDELLRV (366 aa). Composition is skewed to acidic residues over residues 1094-1107 and 1120-1141; these read LDSD…ESED and VVSD…DSDT. A phosphoserine mark is found at serine 1096, serine 1098, and serine 1105. Residues 1146-1169 show a composition bias toward basic residues; that stretch reads RRLRRHPSRPMRQSRRLRRKTPKK. Over residues 1189–1199 the composition is skewed to acidic residues; sequence SDFSDDFSDDF. A compositionally biased stretch (basic residues) spans 1203–1212; sequence RRRRSRRNQK. 3 positions are modified to phosphoserine: serine 1221, serine 1223, and serine 1226. Basic residues predominate over residues 1229 to 1244; that stretch reads SLRRGKEIRRVHKRRL. A phosphoserine mark is found at serine 1258 and serine 1277. A Phosphothreonine modification is found at threonine 1278. Residues 1280 to 1292 show a composition bias toward acidic residues; sequence EYSEADEEEEEEE. Threonine 1305 carries the phosphothreonine modification. Serine 1325 and serine 1336 each carry phosphoserine. Residues 1335 to 1344 show a composition bias toward basic and acidic residues; sequence ESTKKPYRIE. Lysine 1339 bears the N6-acetyllysine mark. A phosphoserine mark is found at serine 1345, serine 1359, and serine 1375. Residues 1394–1408 are compositionally biased toward polar residues; the sequence is PKDNSTASASLASNG.

Component of the RSF-1 ISWI chromatin-remodeling complex at least composed of SMARCA1 and RSF1. Within the RSF-1 ISWI chromatin-remodeling complex interacts with SMARCA1. Component of the RSF-5 ISWI chromatin-remodeling complex (also called the RSF complex) at least composed of SMARCA5/SNF2H and RSF1. Within the RSF-5 ISWI chromatin-remodeling complex interacts with SMARCA5/SNF2H; the interaction is direct. Identified in a centromere complex containing histones H2A, H2B and H4, and at least CENPA, CENPB, CENPC, CENPT, CENPN, HJURP, SUPT16H, SSRP1 and RSF1. Also binds the HBV pX/HBx protein, which is required to activate transcription of the viral genome. Phosphorylated. In terms of tissue distribution, ubiquitously expressed. Highly expressed in the heart, skeletal muscle, kidney and placenta. Expressed at low levels in the brain and colon.

It localises to the nucleus. In terms of biological role, regulatory subunit of the ATP-dependent RSF-1 and RSF-5 ISWI chromatin-remodeling complexes, which form ordered nucleosome arrays on chromatin and facilitate access to DNA during DNA-templated processes such as DNA replication, transcription, and repair. Binds to core histones together with SMARCA5, and is required for the assembly of regular nucleosome arrays by the RSF-5 ISWI chromatin-remodeling complex. Directly stimulates the ATPase activity of SMARCA1 and SMARCA5 in the RSF-1 and RSF-5 ISWI chromatin-remodeling complexes, respectively. The RSF-1 ISWI chromatin remodeling complex has a lower ATP hydrolysis rate than the RSF-5 ISWI chromatin-remodeling complex. The complexes do not have the ability to slide mononucleosomes to the center of a DNA template. Facilitates transcription of hepatitis B virus (HBV) genes by the pX transcription activator. In case of infection by HBV, together with pX, it represses TNF-alpha induced NF-kappa-B transcription activation. Represses transcription when artificially recruited to chromatin by fusion to a heterogeneous DNA binding domain. This Homo sapiens (Human) protein is Remodeling and spacing factor 1 (RSF1).